Reading from the N-terminus, the 332-residue chain is Ribosomal RNA small subunit methyltransferase C (332 aa).

This sequence belongs to the methyltransferase superfamily. RsmC family. As to quaternary structure, monomer.

It localises to the cytoplasm. It catalyses the reaction guanosine(1207) in 16S rRNA + S-adenosyl-L-methionine = N(2)-methylguanosine(1207) in 16S rRNA + S-adenosyl-L-homocysteine + H(+). Functionally, specifically methylates the guanine in position 1207 of 16S rRNA in the 30S particle. The chain is Ribosomal RNA small subunit methyltransferase C from Pseudomonas entomophila (strain L48).